Consider the following 1637-residue polypeptide: Probable serine/threonine-protein kinase gdt2 (1637 aa).

Positions 1–19 (MNYILYILLILIIFSINNT) are cleaved as a signal peptide. Residues 20–896 (FSIGSFVYTP…IPVEKINLLP (877 aa)) are Extracellular-facing. The chain crosses the membrane as a helical span at residues 897–917 (IIVPICVTVLVLLSILIVFFG). Topologically, residues 918-1637 (ARYYKHKKRR…NNNNNNNNNN (720 aa)) are cytoplasmic. A compositionally biased stretch (polar residues) spans 977–990 (SDIQTQSENNNLEP). The tract at residues 977-1000 (SDIQTQSENNNLEPTTVETTTTTT) is disordered. A compositionally biased stretch (low complexity) spans 991–1000 (TTVETTTTTT). The region spanning 1290–1547 (IIIKNYISEG…LSKYLKHLLK (258 aa)) is the Protein kinase domain. Residues 1296–1304 (ISEGTFGIV) and Lys-1317 each bind ATP. Residue Asp-1408 is the Proton acceptor of the active site. Residues 1557–1637 (DKDKKNKKKN…NNNNNNNNNN (81 aa)) are disordered. 2 stretches are compositionally biased toward low complexity: residues 1568–1589 (NNNN…NNNN) and 1597–1637 (NNNI…NNNN).

In the N-terminal section; belongs to the GDT family. It in the C-terminal section; belongs to the protein kinase superfamily. TKL Ser/Thr protein kinase family.

It is found in the membrane. The catalysed reaction is L-seryl-[protein] + ATP = O-phospho-L-seryl-[protein] + ADP + H(+). It catalyses the reaction L-threonyl-[protein] + ATP = O-phospho-L-threonyl-[protein] + ADP + H(+). Regulates the transition between growth and differentiation. This chain is Probable serine/threonine-protein kinase gdt2 (gdt2), found in Dictyostelium discoideum (Social amoeba).